The primary structure comprises 814 residues: ATP-dependent 6-phosphofructokinase 1 (814 aa).

An N-terminal catalytic PFK domain 1 region spans residues 1-420 (MDADASTITP…NLETYKLLTK (420 aa)). ATP contacts are provided by residues Gly-55, 118–119 (RS), and 148–151 (GDGS). Asp-149 is a Mg(2+) binding site. Substrate is bound by residues 194–196 (SID), Arg-231, 238–240 (MGR), Glu-294, Arg-322, and 328–331 (HVQR). Catalysis depends on Asp-196, which acts as the Proton acceptor. An interdomain linker region spans residues 421–435 (MRTVEKDNLSEGHKF). Residues 436-814 (NVAVINVGAP…EEESADSHMF (379 aa)) are C-terminal regulatory PFK domain 2. Residues Lys-505, 563 to 567 (TISNN), Arg-601, 608 to 610 (MGG), Glu-664, Arg-690, 696 to 699 (HVQQ), and Arg-771 each bind beta-D-fructose 2,6-bisphosphate.

It belongs to the phosphofructokinase type A (PFKA) family. ATP-dependent PFK group I subfamily. Eukaryotic two domain clade 'E' sub-subfamily. In terms of assembly, homotetramer. The cofactor is Mg(2+).

It localises to the cytoplasm. The catalysed reaction is beta-D-fructose 6-phosphate + ATP = beta-D-fructose 1,6-bisphosphate + ADP + H(+). Its pathway is carbohydrate degradation; glycolysis; D-glyceraldehyde 3-phosphate and glycerone phosphate from D-glucose: step 3/4. Allosterically activated by ADP, AMP, or fructose 2,6-bisphosphate, and allosterically inhibited by ATP or citrate. Functionally, catalyzes the phosphorylation of D-fructose 6-phosphate to fructose 1,6-bisphosphate by ATP, the first committing step of glycolysis. The protein is ATP-dependent 6-phosphofructokinase 1 of Caenorhabditis elegans.